The chain runs to 196 residues: Molybdopterin synthase catalytic subunit (196 aa).

Residues 1–29 (MSTLPSTDPPPLPASTSSQQPAVHIPPPS) are disordered. Residues 145-146 (HR), lysine 161, and 168-170 (KRE) each bind substrate. The disordered stretch occupies residues 174 to 196 (GEPPGQGEWRANRDTDPEGKSTS). The span at 183-196 (RANRDTDPEGKSTS) shows a compositional bias: basic and acidic residues.

It belongs to the MoaE family. MOCS2B subfamily. As to quaternary structure, heterotetramer; composed of 2 small (MOCS2A) and 2 large (MOCS2B) subunits.

The protein resides in the cytoplasm. The enzyme catalyses 2 [molybdopterin-synthase sulfur-carrier protein]-C-terminal-Gly-aminoethanethioate + cyclic pyranopterin phosphate + H2O = molybdopterin + 2 [molybdopterin-synthase sulfur-carrier protein]-C-terminal Gly-Gly + 2 H(+). It functions in the pathway cofactor biosynthesis; molybdopterin biosynthesis. Functionally, catalytic subunit of the molybdopterin synthase complex, a complex that catalyzes the conversion of precursor Z into molybdopterin. Acts by mediating the incorporation of 2 sulfur atoms from thiocarboxylated MOCS2A into precursor Z to generate a dithiolene group. The protein is Molybdopterin synthase catalytic subunit of Coccidioides immitis (strain RS) (Valley fever fungus).